The following is a 163-amino-acid chain: Globin CTT-V (163 aa).

Residues 1-16 form the signal peptide; sequence MKFFAVLTLCIIGAIA. Positions 18–163 constitute a Globin domain; the sequence is PLTSDEANLV…YTVAFEVIPA (146 aa). Heme b is bound by residues His76 and His111.

It belongs to the globin family.

The chain is Globin CTT-V (CTT-V) from Chironomus thummi piger (Midge).